We begin with the raw amino-acid sequence, 483 residues long: Endoplasmic reticulum lectin 1 (483 aa).

Residues 1–33 form the signal peptide; it reads MEEGDGGLRSLVPGGPLLLVLYGLLEASGGGRA. MRH domains follow at residues 111-246 and 342-469; these read SSCS…LCSH and SYCF…ICKI. C113 and C126 form a disulfide bridge. The N-linked (GlcNAc...) asparagine glycan is linked to N195. Disulfide bonds link C199/C232, C215/C244, C344/C357, C421/C455, and C436/C467.

May form a complex with OS9, HSPA5, SYVN1, and SEL1L with which it interacts directly. Interacts (via PRKCSH 2 domain) with KREMEN2 (when glycosylated). Interacts with HSPA5. In terms of processing, N-glycosylated.

The protein resides in the endoplasmic reticulum lumen. In terms of biological role, probable lectin that binds selectively to improperly folded lumenal proteins. May function in endoplasmic reticulum quality control and endoplasmic reticulum-associated degradation (ERAD) of both non-glycosylated proteins and glycoproteins. This chain is Endoplasmic reticulum lectin 1 (Erlec1), found in Mus musculus (Mouse).